The primary structure comprises 618 residues: 1-deoxy-D-xylulose-5-phosphate synthase (618 aa).

Thiamine diphosphate contacts are provided by residues histidine 74 and 115–117; that span reads GHS. Residue aspartate 146 participates in Mg(2+) binding. Thiamine diphosphate is bound by residues 147-148, asparagine 175, tyrosine 286, and glutamate 366; that span reads GA. A Mg(2+)-binding site is contributed by asparagine 175.

This sequence belongs to the transketolase family. DXPS subfamily. As to quaternary structure, homodimer. The cofactor is Mg(2+). Thiamine diphosphate serves as cofactor.

It catalyses the reaction D-glyceraldehyde 3-phosphate + pyruvate + H(+) = 1-deoxy-D-xylulose 5-phosphate + CO2. The protein operates within metabolic intermediate biosynthesis; 1-deoxy-D-xylulose 5-phosphate biosynthesis; 1-deoxy-D-xylulose 5-phosphate from D-glyceraldehyde 3-phosphate and pyruvate: step 1/1. Catalyzes the acyloin condensation reaction between C atoms 2 and 3 of pyruvate and glyceraldehyde 3-phosphate to yield 1-deoxy-D-xylulose-5-phosphate (DXP). The protein is 1-deoxy-D-xylulose-5-phosphate synthase of Clostridium tetani (strain Massachusetts / E88).